Reading from the N-terminus, the 264-residue chain is Thymidylate synthase (264 aa).

Arg-21 contacts dUMP. His-51 is a binding site for (6R)-5,10-methylene-5,6,7,8-tetrahydrofolate. 126–127 (RR) is a dUMP binding site. Cys-146 serves as the catalytic Nucleophile. DUMP is bound by residues 166 to 169 (RSCD), Asn-177, and 207 to 209 (HLY). Asp-169 provides a ligand contact to (6R)-5,10-methylene-5,6,7,8-tetrahydrofolate. Position 263 (Ala-263) interacts with (6R)-5,10-methylene-5,6,7,8-tetrahydrofolate.

This sequence belongs to the thymidylate synthase family. Bacterial-type ThyA subfamily. Homodimer.

The protein resides in the cytoplasm. It catalyses the reaction dUMP + (6R)-5,10-methylene-5,6,7,8-tetrahydrofolate = 7,8-dihydrofolate + dTMP. It functions in the pathway pyrimidine metabolism; dTTP biosynthesis. Its function is as follows. Catalyzes the reductive methylation of 2'-deoxyuridine-5'-monophosphate (dUMP) to 2'-deoxythymidine-5'-monophosphate (dTMP) while utilizing 5,10-methylenetetrahydrofolate (mTHF) as the methyl donor and reductant in the reaction, yielding dihydrofolate (DHF) as a by-product. This enzymatic reaction provides an intracellular de novo source of dTMP, an essential precursor for DNA biosynthesis. The chain is Thymidylate synthase from Xenorhabdus nematophila (strain ATCC 19061 / DSM 3370 / CCUG 14189 / LMG 1036 / NCIMB 9965 / AN6).